Here is a 537-residue protein sequence, read N- to C-terminus: Chaperonin GroEL (537 aa).

Residues 31–34, 87–91, Gly-415, and Asp-495 each bind ATP; these read TLGP and DGTTT.

The protein belongs to the chaperonin (HSP60) family. As to quaternary structure, forms a cylinder of 14 subunits composed of two heptameric rings stacked back-to-back. Interacts with the co-chaperonin GroES.

Its subcellular location is the cytoplasm. It carries out the reaction ATP + H2O + a folded polypeptide = ADP + phosphate + an unfolded polypeptide.. In terms of biological role, together with its co-chaperonin GroES, plays an essential role in assisting protein folding. The GroEL-GroES system forms a nano-cage that allows encapsulation of the non-native substrate proteins and provides a physical environment optimized to promote and accelerate protein folding. This Methanoregula boonei (strain DSM 21154 / JCM 14090 / 6A8) protein is Chaperonin GroEL.